The sequence spans 124 residues: Small ribosomal subunit protein uS12 (124 aa).

At Asp-89 the chain carries 3-methylthioaspartic acid. The segment at 104-124 (ALGVEDRKRGRSKYGAKRPKA) is disordered. Residues 112–124 (RGRSKYGAKRPKA) are compositionally biased toward basic residues.

Belongs to the universal ribosomal protein uS12 family. In terms of assembly, part of the 30S ribosomal subunit. Contacts proteins S8 and S17. May interact with IF1 in the 30S initiation complex.

With S4 and S5 plays an important role in translational accuracy. Its function is as follows. Interacts with and stabilizes bases of the 16S rRNA that are involved in tRNA selection in the A site and with the mRNA backbone. Located at the interface of the 30S and 50S subunits, it traverses the body of the 30S subunit contacting proteins on the other side and probably holding the rRNA structure together. The combined cluster of proteins S8, S12 and S17 appears to hold together the shoulder and platform of the 30S subunit. This is Small ribosomal subunit protein uS12 from Treponema denticola (strain ATCC 35405 / DSM 14222 / CIP 103919 / JCM 8153 / KCTC 15104).